The primary structure comprises 227 residues: Cytochrome c oxidase subunit 2 (227 aa).

Over 1-14 (MAYPFQLGLQDATS) the chain is Mitochondrial intermembrane. The chain crosses the membrane as a helical span at residues 15-45 (PIMEELLHFHDHTLMIVFLISSLVLYIISLM). Residues 46–59 (LTTKLTHTSTMDAQ) are Mitochondrial matrix-facing. Residues 60 to 87 (EVETVWTILPAIILILIALPSLRILYMM) traverse the membrane as a helical segment. At 88–227 (DEINNPSLTV…YFETWSALMV (140 aa)) the chain is on the mitochondrial intermembrane side. Cu cation-binding residues include His161, Cys196, Glu198, Cys200, His204, and Met207. Glu198 is a Mg(2+) binding site. Position 218 is a phosphotyrosine (Tyr218).

The protein belongs to the cytochrome c oxidase subunit 2 family. Component of the cytochrome c oxidase (complex IV, CIV), a multisubunit enzyme composed of 14 subunits. The complex is composed of a catalytic core of 3 subunits MT-CO1, MT-CO2 and MT-CO3, encoded in the mitochondrial DNA, and 11 supernumerary subunits COX4I, COX5A, COX5B, COX6A, COX6B, COX6C, COX7A, COX7B, COX7C, COX8 and NDUFA4, which are encoded in the nuclear genome. The complex exists as a monomer or a dimer and forms supercomplexes (SCs) in the inner mitochondrial membrane with NADH-ubiquinone oxidoreductase (complex I, CI) and ubiquinol-cytochrome c oxidoreductase (cytochrome b-c1 complex, complex III, CIII), resulting in different assemblies (supercomplex SCI(1)III(2)IV(1) and megacomplex MCI(2)III(2)IV(2)). Found in a complex with TMEM177, COA6, COX18, COX20, SCO1 and SCO2. Interacts with TMEM177 in a COX20-dependent manner. Interacts with COX20. Interacts with COX16. The cofactor is Cu cation.

The protein resides in the mitochondrion inner membrane. It catalyses the reaction 4 Fe(II)-[cytochrome c] + O2 + 8 H(+)(in) = 4 Fe(III)-[cytochrome c] + 2 H2O + 4 H(+)(out). Functionally, component of the cytochrome c oxidase, the last enzyme in the mitochondrial electron transport chain which drives oxidative phosphorylation. The respiratory chain contains 3 multisubunit complexes succinate dehydrogenase (complex II, CII), ubiquinol-cytochrome c oxidoreductase (cytochrome b-c1 complex, complex III, CIII) and cytochrome c oxidase (complex IV, CIV), that cooperate to transfer electrons derived from NADH and succinate to molecular oxygen, creating an electrochemical gradient over the inner membrane that drives transmembrane transport and the ATP synthase. Cytochrome c oxidase is the component of the respiratory chain that catalyzes the reduction of oxygen to water. Electrons originating from reduced cytochrome c in the intermembrane space (IMS) are transferred via the dinuclear copper A center (CU(A)) of subunit 2 and heme A of subunit 1 to the active site in subunit 1, a binuclear center (BNC) formed by heme A3 and copper B (CU(B)). The BNC reduces molecular oxygen to 2 water molecules using 4 electrons from cytochrome c in the IMS and 4 protons from the mitochondrial matrix. The protein is Cytochrome c oxidase subunit 2 (MT-CO2) of Canis lupus familiaris (Dog).